Reading from the N-terminus, the 240-residue chain is Uridylate cyclase (240 aa).

Residues 45–180 (TYLYADMANS…RAPNLAAKLS (136 aa)) form the Guanylate cyclase domain. Tyr48 contributes to the a ribonucleoside 5'-triphosphate binding site. Asp50 and Asp94 together coordinate Mn(2+). Arg95 is an a ribonucleoside 5'-triphosphate binding site.

The protein belongs to the adenylyl cyclase class-4/guanylyl cyclase family. Pyrimidine cyclase subfamily. Homodimer. Requires Mn(2+) as cofactor.

Its subcellular location is the cytoplasm. It catalyses the reaction UTP = 3',5'-cyclic UMP + diphosphate. Its function is as follows. Pycsar (pyrimidine cyclase system for antiphage resistance) provides immunity against bacteriophage. The pyrimidine cyclase (PycC) synthesizes cyclic nucleotides in response to infection; these serve as specific second messenger signals. The signals activate the adjacent effector, leading to bacterial cell death and abortive phage infection. A clade B Pycsar system. The pyrimidine cyclase gene of a two-gene Pycsar system, weakly generates cyclic UMP (cUMP) from UTP, has little to no activity on ATP, CTP or GTP. Expression of this and adjacent effector RsmPycTM (AC A0A1V0HUU2) probably confers resistance to bacteriophage. The genes are probably only expressed in response to bacteriophage infection. The chain is Uridylate cyclase from Rhodovulum sp. (strain MB263).